Reading from the N-terminus, the 254-residue chain is Type III pantothenate kinase (254 aa).

ATP is bound at residue 6-13 (DVGNTNTT). Substrate contacts are provided by residues tyrosine 100 and 107–110 (GADR). Catalysis depends on aspartate 109, which acts as the Proton acceptor. Aspartate 129 is a binding site for K(+). Threonine 132 contributes to the ATP binding site. Threonine 184 contacts substrate.

It belongs to the type III pantothenate kinase family. In terms of assembly, homodimer. It depends on NH4(+) as a cofactor. K(+) is required as a cofactor.

The protein resides in the cytoplasm. It catalyses the reaction (R)-pantothenate + ATP = (R)-4'-phosphopantothenate + ADP + H(+). It functions in the pathway cofactor biosynthesis; coenzyme A biosynthesis; CoA from (R)-pantothenate: step 1/5. In terms of biological role, catalyzes the phosphorylation of pantothenate (Pan), the first step in CoA biosynthesis. In Anaeromyxobacter dehalogenans (strain 2CP-C), this protein is Type III pantothenate kinase.